The sequence spans 382 residues: Lipid-A-disaccharide synthase (382 aa).

Belongs to the LpxB family.

The enzyme catalyses 2-N,3-O-bis[(3R)-3-hydroxytetradecanoyl]-alpha-D-glucosaminyl 1-phosphate + UDP-2-N,3-O-bis[(3R)-3-hydroxytetradecanoyl]-alpha-D-glucosamine = lipid A disaccharide (E. coli) + UDP + H(+). The catalysed reaction is a lipid X + a UDP-2-N,3-O-bis[(3R)-3-hydroxyacyl]-alpha-D-glucosamine = a lipid A disaccharide + UDP + H(+). It participates in glycolipid biosynthesis; lipid IV(A) biosynthesis; lipid IV(A) from (3R)-3-hydroxytetradecanoyl-[acyl-carrier-protein] and UDP-N-acetyl-alpha-D-glucosamine: step 5/6. Its function is as follows. Condensation of UDP-2,3-diacylglucosamine and 2,3-diacylglucosamine-1-phosphate to form lipid A disaccharide, a precursor of lipid A, a phosphorylated glycolipid that anchors the lipopolysaccharide to the outer membrane of the cell. In Salmonella paratyphi A (strain AKU_12601), this protein is Lipid-A-disaccharide synthase.